The following is a 622-amino-acid chain: Low affinity potassium transport system protein Kup (622 aa).

A run of 12 helical transmembrane segments spans residues 9-29, 52-72, 99-119, 137-157, 165-185, 213-233, 247-267, 276-296, 337-357, 363-383, 394-414, and 419-439; these read LPAVTLAAIGVVYGDIGTSPL, FLSLIFWLLILIVSLKYLLFV, TPVLVIIGLIGGSFFYGEVVI, PSLQEFIVPLSVVVLTLLFFI, VGKLFAPVMLLWFLTLGVLGV, VSFFALGAVVLAITGVEALYA, WFSAVLPSLVLNYFGQGALLL, PFFLLAPDWAMIPLLILATLA, IYIPFINWLLYIAVVLVIVSF, LAAAYGIAVTGTMVLTSILSC, LLIVSVLLLALLCLDVSMFAA, and IFSGGWLPLLLGFLMFIAMIT.

It belongs to the HAK/KUP transporter (TC 2.A.72) family.

The protein resides in the cell inner membrane. It carries out the reaction K(+)(in) + H(+)(in) = K(+)(out) + H(+)(out). Its function is as follows. Responsible for the low-affinity transport of potassium into the cell. Likely operates as a K(+):H(+) symporter. This is Low affinity potassium transport system protein Kup from Sodalis glossinidius (strain morsitans).